Reading from the N-terminus, the 332-residue chain is Holliday junction branch migration complex subunit RuvB (332 aa).

A large ATPase domain (RuvB-L) region spans residues 1–181; sequence MSRILDNEIM…FGITGHMEYY (181 aa). ATP-binding positions include Leu-20, Arg-21, Gly-62, Lys-65, Thr-66, Thr-67, 128-130, Arg-171, Tyr-181, and Arg-218; that span reads EDF. A Mg(2+)-binding site is contributed by Thr-66. Residues 182–252 form a small ATPAse domain (RuvB-S) region; it reads AHADLTEIVE…ITDKALTMLD (71 aa). The segment at 255–332 is head domain (RuvB-H); sequence HEGLDYVDQK…EHLGYEYSEK (78 aa). DNA is bound by residues Arg-291, Arg-310, Arg-312, and Arg-315.

It belongs to the RuvB family. In terms of assembly, homohexamer. Forms an RuvA(8)-RuvB(12)-Holliday junction (HJ) complex. HJ DNA is sandwiched between 2 RuvA tetramers; dsDNA enters through RuvA and exits via RuvB. An RuvB hexamer assembles on each DNA strand where it exits the tetramer. Each RuvB hexamer is contacted by two RuvA subunits (via domain III) on 2 adjacent RuvB subunits; this complex drives branch migration. In the full resolvosome a probable DNA-RuvA(4)-RuvB(12)-RuvC(2) complex forms which resolves the HJ.

The protein localises to the cytoplasm. It catalyses the reaction ATP + H2O = ADP + phosphate + H(+). The RuvA-RuvB-RuvC complex processes Holliday junction (HJ) DNA during genetic recombination and DNA repair, while the RuvA-RuvB complex plays an important role in the rescue of blocked DNA replication forks via replication fork reversal (RFR). RuvA specifically binds to HJ cruciform DNA, conferring on it an open structure. The RuvB hexamer acts as an ATP-dependent pump, pulling dsDNA into and through the RuvAB complex. RuvB forms 2 homohexamers on either side of HJ DNA bound by 1 or 2 RuvA tetramers; 4 subunits per hexamer contact DNA at a time. Coordinated motions by a converter formed by DNA-disengaged RuvB subunits stimulates ATP hydrolysis and nucleotide exchange. Immobilization of the converter enables RuvB to convert the ATP-contained energy into a lever motion, pulling 2 nucleotides of DNA out of the RuvA tetramer per ATP hydrolyzed, thus driving DNA branch migration. The RuvB motors rotate together with the DNA substrate, which together with the progressing nucleotide cycle form the mechanistic basis for DNA recombination by continuous HJ branch migration. Branch migration allows RuvC to scan DNA until it finds its consensus sequence, where it cleaves and resolves cruciform DNA. The polypeptide is Holliday junction branch migration complex subunit RuvB (Streptococcus pneumoniae serotype 2 (strain D39 / NCTC 7466)).